A 178-amino-acid polypeptide reads, in one-letter code: Aspartate carbamoyltransferase regulatory chain (178 aa).

The span at 1 to 15 (MNDREPNQKESKESV) shows a compositional bias: basic and acidic residues. Positions 1 to 23 (MNDREPNQKESKESVNDAVPRAR) are disordered. Zn(2+) is bound by residues Cys-133, Cys-138, Cys-159, and Cys-162.

This sequence belongs to the PyrI family. In terms of assembly, contains catalytic and regulatory chains. It depends on Zn(2+) as a cofactor.

Functionally, involved in allosteric regulation of aspartate carbamoyltransferase. The protein is Aspartate carbamoyltransferase regulatory chain of Haloquadratum walsbyi (strain DSM 16790 / HBSQ001).